The sequence spans 371 residues: 2-aminoethylphosphonate--pyruvate transaminase (371 aa).

At Lys-195 the chain carries N6-(pyridoxal phosphate)lysine.

Belongs to the class-V pyridoxal-phosphate-dependent aminotransferase family. PhnW subfamily. Homotetramer; however this is for an enzyme with a molecular weight of 16500, which is in disagreement with the weight of this protein. Pyridoxal 5'-phosphate serves as cofactor.

The catalysed reaction is (2-aminoethyl)phosphonate + pyruvate = phosphonoacetaldehyde + L-alanine. With respect to regulation, inhibited by phosphonic acids and very slightly inhibited by aminophosphonic acids. Its function is as follows. Involved in phosphonate degradation. This is 2-aminoethylphosphonate--pyruvate transaminase (phnW) from Pseudomonas aeruginosa (strain ATCC 15692 / DSM 22644 / CIP 104116 / JCM 14847 / LMG 12228 / 1C / PRS 101 / PAO1).